Here is a 638-residue protein sequence, read N- to C-terminus: Probable potassium transport system protein Kup (638 aa).

The next 12 membrane-spanning stretches (helical) occupy residues 25–45, 65–85, 114–134, 152–172, 184–204, 226–246, 262–282, 291–311, 352–372, 382–402, 410–430, and 434–454; these read LAIA…LYSL, VISL…LLFV, AGAL…DAVI, PHLS…LFWI, FGPI…YHIV, LLQA…AEAL, AYGL…ALLI, PFFL…STVA, IYVP…VVGF, YGIA…VVMV, LLVG…FGAN, and VAQG…LLMT.

It belongs to the HAK/KUP transporter (TC 2.A.72) family.

It localises to the cell inner membrane. It carries out the reaction K(+)(in) + H(+)(in) = K(+)(out) + H(+)(out). Its function is as follows. Transport of potassium into the cell. Likely operates as a K(+):H(+) symporter. The protein is Probable potassium transport system protein Kup of Burkholderia cenocepacia (strain HI2424).